The sequence spans 138 residues: Ribosomal RNA large subunit methyltransferase H (138 aa).

Residues glycine 86 and 105-110 each bind S-adenosyl-L-methionine; that span reads LSPLTF.

It belongs to the RNA methyltransferase RlmH family. Homodimer.

It localises to the cytoplasm. The catalysed reaction is pseudouridine(1915) in 23S rRNA + S-adenosyl-L-methionine = N(3)-methylpseudouridine(1915) in 23S rRNA + S-adenosyl-L-homocysteine + H(+). Specifically methylates the pseudouridine at position 1915 (m3Psi1915) in 23S rRNA. The polypeptide is Ribosomal RNA large subunit methyltransferase H (Prochlorococcus marinus (strain MIT 9215)).